The following is a 379-amino-acid chain: Stimulator of interferon genes protein (379 aa).

The Cytoplasmic portion of the chain corresponds to 1–17; sequence MPYSNLHPSIPRPRSYR. Residues 1–190 are mediates interaction with ZDHHC1 and ZDHHC11; the sequence is MPYSNLHPSI…MFNQLHNNML (190 aa). A helical transmembrane segment spans residues 18 to 34; that stretch reads FKLAAFVLLVGSLMSLW. The Lumenal portion of the chain corresponds to 35-44; that stretch reads MTGEPPSHTL. A helical membrane pass occupies residues 45 to 69; that stretch reads HYLALHVASQQLGLLLKKLCCLAEE. Residues 70 to 91 lie on the Cytoplasmic side of the membrane; that stretch reads LCHVQSRYQGSYWKAVRACVGS. Cys88 carries the S-palmitoyl cysteine lipid modification. The chain crosses the membrane as a helical span at residues 92–106; sequence PICFMALILLSFYFY. Residues 107–116 are Lumenal-facing; the sequence is CSLENTSDLR. A helical membrane pass occupies residues 117–134; sequence LAWHLGILVLSKSLSMTL. The Cytoplasmic portion of the chain corresponds to 135-379; the sequence is DLQSLAPAEV…QPLPLRTDLI (245 aa). A Glycyl lysine isopeptide (Lys-Gly) (interchain with G-Cter in ubiquitin) cross-link involves residue Lys151. A cyclic dinucleotide-binding domain (CBD) region spans residues 153 to 340; the sequence is FNVAHGLAWS…RHIRQEEKEE (188 aa). Residue 162–167 participates in 2',3'-cGAMP binding; that stretch reads SYYIGY. Gly166 serves as a coordination point for 3',3'-c-di-GMP. Position 167 (Tyr167) interacts with 2',3'-cUAMP. A Glycyl lysine isopeptide (Lys-Gly) (interchain with G-Cter in ubiquitin) cross-link involves residue Lys236. A 2',3'-cUAMP-binding site is contributed by Arg238. Residues 238 to 241 and Thr263 each bind 2',3'-cGAMP; that span reads RAYS. 3',3'-c-di-GMP contacts are provided by residues 238 to 241 and Thr263; that span reads RAYS. A Phosphoserine modification is found at Ser241. Thr263 is a 2',3'-cUAMP binding site. Residue Lys338 forms a Glycyl lysine isopeptide (Lys-Gly) (interchain with G-Cter in SUMO) linkage. Residues 340–379 are C-terminal tail (CTT); it reads EVTMSGPPTSVAPRPSLLSQEPRLLISGMEQPLPLRTDLI. Ser355 is subject to Phosphoserine. Phosphoserine; by TBK1 is present on residues Ser358 and Ser366. The pLxIS motif signature appears at 363–366; sequence LLIS.

It belongs to the STING family. As to quaternary structure, homodimer; forms a homodimer in absence of cyclic nucleotide (c-di-GMP or cGAMP); 'Lys-63'-linked ubiquitination at Lys-151 is required for homodimerization. Homotetramer; in presence of cyclic nucleotide (c-di-GMP or cGAMP), forms tetramers and higher-order oligomers through side-by-side packing. Interacts (when phosphorylated) with IRF3; following activation and phosphorylation on the pLxIS motif by TBK1, recruits IRF3. Interacts with RIGI, MAVS and SSR2. Interacts with RNF5 and TRIM56. Interacts with TBK1; when homodimer, leading to subsequent production of IFN-beta. Interacts with IFIT1 and IFIT2. Interacts with TRIM29; this interaction induces STING1 ubiquitination and subsequent degradation. Associates with the MHC-II complex. Interacts with STEEP1; interaction takes place upon cGAMP-activation and STING1 phosphorylation by MAP3K7/TAK1 and promotes STING1 translocation to COPII vesicles. Interacts with SEC24A, SEC24B and SEC24C; promoting translocation to COPII vesicles. Interacts (when ubiquitinated) with SQSTM1; leading to relocalization to autophagosomes. Interacts with SURF4. Interacts with HNRNPA2B1. Interacts with ZDHHC1; ZDHHC1 constitutively interacts with STING1 and in presence of DNA viruses activates it by promoting its cGAMP-induced oligomerization and the recruitment of downstream signaling components. Interacts with ZDHHC11; in presence of DNA viruses promotes the recruitment of IRF3 to STING1. Interacts with TOMM70. Interacts with TAB1; promoting recruitment of TAB1 to the endoplasmic reticulum membrane and subsequent activation of MAP3K7/TAK1. Interacts (via transmembrane domain) with TMEM203. Interacts with DDX41. In terms of processing, phosphorylation by TBK1 leads to activation and production of IFN-beta. Following cyclic nucleotide (c-di-GMP or cGAMP)-binding, activation and translocation from the endoplasmic reticulum, STING1 is phosphorylated by TBK1 at Ser-366 in the pLxIS motif. The phosphorylated pLxIS motif constitutes an IRF3-binding motif, leading to recruitment of the transcription factor IRF3 to induce type-I interferons and other cytokines. Phosphorylated on tyrosine residues upon MHC-II aggregation. Dephosphorylation by PPP6C leads to inactivation and decreased production of IFN-beta. Phosphorylation at Ser-358 is also required to activate IRF3. Phosphorylation at Ser-355 by MAP3K7/TAK1 facilitates its interaction with STEEP1, promoting STING1 translocation to COPII vesicles. Post-translationally, ubiquitinated. Ubiquitinated via 'Lys-63'-linked ubiquitin chains in response to double-stranded DNA treatment, leading to relocalization to autophagosomes and subsequent degradation; this process is dependent on SQSTM1. 'Lys-63'-linked ubiquitination mediated by TRIM56 at Lys-151 promotes homodimerization and recruitment of the antiviral kinase TBK1 and subsequent production of IFN-beta. 'Lys-48'-linked polyubiquitination at Lys-151 occurring after viral infection is mediated by RNF5 and leads to proteasomal degradation. 'Lys-11'-linked polyubiquitination at Lys-151 by RNF26 leads to stabilize STING1: it protects STING1 from RNF5-mediated 'Lys-48'-linked polyubiquitination. 'Lys-33'-linked and 'Lys-48'-linked deubiquitinated by USP20; leading to its stabilization and promotion of innate antiviral response. 'Lys-48'-linked deubiquitinated by USP44; leading to its stabilization and promotion of innate antiviral response. Deubiquitinated by USP13; leading to inhibition of innate antiviral response. 'Lys-63'-linked deubiquitinated by USP49; leading to inhibition of the subsequent recruitment of TBK1 to the signaling complex. 'Lys-63'-linked ubiquitination mediated by RNF39 promotes the activation of the cGAS-STING pathway. Sumoylated at Lys-338 by TRIM38 during the early phase of viral infection, promoting its stability by preventing its relocalization to autophagosomes and subsequent degradation. Desumoylated by SENP2 during the late phase of viral infection. In terms of processing, palmitoylation takes place in the Golgi apparatus and creates a platform for the recruitment of TBK1.

The protein resides in the endoplasmic reticulum membrane. The protein localises to the cytoplasm. It is found in the perinuclear region. It localises to the endoplasmic reticulum-Golgi intermediate compartment membrane. Its subcellular location is the golgi apparatus membrane. The protein resides in the cytoplasmic vesicle. The protein localises to the autophagosome membrane. It is found in the mitochondrion outer membrane. It localises to the cell membrane. It carries out the reaction H(+)(in) = H(+)(out). In contrast to mouse protein, not activated by anticancer molecule 5,6-dimethylxanthenone 4-acetic acid (DMXAA). In terms of biological role, facilitator of innate immune signaling that acts as a sensor of cytosolic DNA from bacteria and viruses and promotes the production of type I interferon (IFN-alpha and IFN-beta). Innate immune response is triggered in response to non-CpG double-stranded DNA from viruses and bacteria delivered to the cytoplasm. Acts by binding cyclic dinucleotides: recognizes and binds cyclic di-GMP (c-di-GMP), a second messenger produced by bacteria, cyclic UMP-AMP (2',3'-cUAMP), and cyclic GMP-AMP (cGAMP), a messenger produced by CGAS in response to DNA virus in the cytosol. Upon binding to c-di-GMP, cUAMP or cGAMP, STING1 oligomerizes, translocates from the endoplasmic reticulum and is phosphorylated by TBK1 on the pLxIS motif, leading to recruitment and subsequent activation of the transcription factor IRF3 to induce expression of type I interferon and exert a potent anti-viral state. Exhibits 2',3' phosphodiester linkage-specific ligand recognition: can bind both 2'-3' linked cGAMP (2'-3'-cGAMP) and 3'-3' linked cGAMP but is preferentially activated by 2'-3' linked cGAMP. The preference for 2'-3'-cGAMP, compared to other linkage isomers is probably due to the ligand itself, whichs adopts an organized free-ligand conformation that resembles the STING1-bound conformation and pays low energy costs in changing into the active conformation. In addition to promote the production of type I interferons, plays a direct role in autophagy. Following cGAMP-binding, STING1 buds from the endoplasmic reticulum into COPII vesicles, which then form the endoplasmic reticulum-Golgi intermediate compartment (ERGIC). The ERGIC serves as the membrane source for WIPI2 recruitment and LC3 lipidation, leading to formation of autophagosomes that target cytosolic DNA or DNA viruses for degradation by the lysosome. Promotes autophagy by acting as a proton channel that directs proton efflux from the Golgi to facilitate MAP1LC3B/LC3B lipidation. The autophagy- and interferon-inducing activities can be uncoupled and autophagy induction is independent of TBK1 phosphorylation. Autophagy is also triggered upon infection by bacteria: following c-di-GMP-binding, which is produced by live Gram-positive bacteria, promotes reticulophagy. May be involved in translocon function, the translocon possibly being able to influence the induction of type I interferons. May be involved in transduction of apoptotic signals via its association with the major histocompatibility complex class II (MHC-II). This is Stimulator of interferon genes protein from Rattus norvegicus (Rat).